Reading from the N-terminus, the 371-residue chain is GPI mannosyltransferase 1 (371 aa).

A run of 8 helical transmembrane segments spans residues 64–84 (FPSWGKYLFSISDLIAGWLMI), 120–140 (AILGILSIALLYLIEKKSVWL), 144–164 (ILGFSVHFKIYPFMYGIAFLV), 190–210 (IVVGSLFMFTICNLLMYYLYG), 248–268 (ASSLFAFLPQLSLCMLIPLVF), 290–310 (VCTSQYFMWYLVFLPLVLPNS), 318–338 (LICLSLWIIGQLLWLISAYNL), and 344–364 (SVFIPLWLSGLLFFFFNVYEL).

Belongs to the PIGM family.

It localises to the endoplasmic reticulum membrane. It participates in glycolipid biosynthesis; glycosylphosphatidylinositol-anchor biosynthesis. Its function is as follows. Mannosyltransferase involved in glycosylphosphatidylinositol-anchor biosynthesis. Transfers the first alpha-1,4-mannose to GlcN-acyl-PI during GPI precursor assembly. Required for cell wall integrity. The sequence is that of GPI mannosyltransferase 1 (gpi14) from Schizosaccharomyces pombe (strain 972 / ATCC 24843) (Fission yeast).